A 325-amino-acid chain; its full sequence is tRNA dimethylallyltransferase (325 aa).

Position 17 to 24 (17 to 24 (GPTASGKT)) interacts with ATP. 19 to 24 (TASGKT) is a binding site for substrate. Interaction with substrate tRNA regions lie at residues 42-45 (DSAL), 166-170 (QRIQR), 251-256 (RCVGYR), and 284-291 (KRQITWLR).

This sequence belongs to the IPP transferase family. Monomer. Mg(2+) serves as cofactor.

It catalyses the reaction adenosine(37) in tRNA + dimethylallyl diphosphate = N(6)-dimethylallyladenosine(37) in tRNA + diphosphate. Its function is as follows. Catalyzes the transfer of a dimethylallyl group onto the adenine at position 37 in tRNAs that read codons beginning with uridine, leading to the formation of N6-(dimethylallyl)adenosine (i(6)A). The polypeptide is tRNA dimethylallyltransferase (Burkholderia multivorans (strain ATCC 17616 / 249)).